The chain runs to 149 residues: Glutamyl-tRNA(Gln) amidotransferase subunit C, mitochondrial (149 aa).

It belongs to the GatC family. Subunit of the heterotrimeric GatCAB amidotransferase (AdT) complex, composed of A, B and C subunits.

The protein resides in the mitochondrion. The enzyme catalyses L-glutamyl-tRNA(Gln) + L-glutamine + ATP + H2O = L-glutaminyl-tRNA(Gln) + L-glutamate + ADP + phosphate + H(+). Functionally, allows the formation of correctly charged Gln-tRNA(Gln) through the transamidation of misacylated Glu-tRNA(Gln) in the mitochondria. The reaction takes place in the presence of glutamine and ATP through an activated gamma-phospho-Glu-tRNA(Gln). This is Glutamyl-tRNA(Gln) amidotransferase subunit C, mitochondrial from Trichoplax adhaerens (Trichoplax reptans).